A 286-amino-acid chain; its full sequence is MVAVIIKGNEVAEKKRAQLTEEVVKLKEQGIVPGLAVILVGEDPASRSYVKGKEKGCEQVGIYSELIEFPETITEERLLAEIDRLNGDDRINGILVQLPLPKHIEEKAIIERISPEKDVDGFHPISVGRMMTGQDTFLPCTPHGIVELVKETNLDISGKHVVVIGRSNIVGKPVGQLFLNENATVTYCHSKTQNMKELTKLADILIVAVGRPKMVTADYLKEGAVVIDVGVNRLETGKLCGDVDFDNVLDVAGYITPVPKGVGPMTITMLLHNTVESAKRAGVVCK.

NADP(+) is bound by residues 165–167 (GRS), S190, and V231.

This sequence belongs to the tetrahydrofolate dehydrogenase/cyclohydrolase family. Homodimer.

The catalysed reaction is (6R)-5,10-methylene-5,6,7,8-tetrahydrofolate + NADP(+) = (6R)-5,10-methenyltetrahydrofolate + NADPH. It catalyses the reaction (6R)-5,10-methenyltetrahydrofolate + H2O = (6R)-10-formyltetrahydrofolate + H(+). The protein operates within one-carbon metabolism; tetrahydrofolate interconversion. Functionally, catalyzes the oxidation of 5,10-methylenetetrahydrofolate to 5,10-methenyltetrahydrofolate and then the hydrolysis of 5,10-methenyltetrahydrofolate to 10-formyltetrahydrofolate. This chain is Bifunctional protein FolD, found in Bacillus cereus (strain ATCC 10987 / NRS 248).